Consider the following 154-residue polypeptide: Small ribosomal subunit protein uS19 (154 aa).

Belongs to the universal ribosomal protein uS19 family.

This chain is Small ribosomal subunit protein uS19 (RPS15), found in Oryza sativa subsp. japonica (Rice).